A 330-amino-acid polypeptide reads, in one-letter code: Aspartate--ammonia ligase (330 aa).

The protein belongs to the class-II aminoacyl-tRNA synthetase family. AsnA subfamily. In terms of assembly, homodimer.

The protein resides in the cytoplasm. It carries out the reaction L-aspartate + NH4(+) + ATP = L-asparagine + AMP + diphosphate + H(+). The protein operates within amino-acid biosynthesis; L-asparagine biosynthesis; L-asparagine from L-aspartate (ammonia route): step 1/1. This Salmonella typhimurium (strain LT2 / SGSC1412 / ATCC 700720) protein is Aspartate--ammonia ligase.